The following is a 506-amino-acid chain: 2-isopropylmalate synthase (506 aa).

Residues 6–267 (IIVFDTTLRD…YTDIVTKEIY (262 aa)) form the Pyruvate carboxyltransferase domain. 4 residues coordinate Mn(2+): Asp-15, His-201, His-203, and Asn-237. A regulatory domain region spans residues 391–506 (SIQTLSTSSC…LNSYLSMKNR (116 aa)).

Belongs to the alpha-IPM synthase/homocitrate synthase family. LeuA type 1 subfamily. Homodimer. The cofactor is Mn(2+).

The protein localises to the cytoplasm. The catalysed reaction is 3-methyl-2-oxobutanoate + acetyl-CoA + H2O = (2S)-2-isopropylmalate + CoA + H(+). The protein operates within amino-acid biosynthesis; L-leucine biosynthesis; L-leucine from 3-methyl-2-oxobutanoate: step 1/4. Catalyzes the condensation of the acetyl group of acetyl-CoA with 3-methyl-2-oxobutanoate (2-ketoisovalerate) to form 3-carboxy-3-hydroxy-4-methylpentanoate (2-isopropylmalate). This chain is 2-isopropylmalate synthase, found in Campylobacter fetus subsp. fetus (strain 82-40).